The chain runs to 66 residues: Large ribosomal subunit protein uL29 (66 aa).

This sequence belongs to the universal ribosomal protein uL29 family.

The sequence is that of Large ribosomal subunit protein uL29 from Thermotoga sp. (strain RQ2).